The chain runs to 857 residues: Glucans biosynthesis glucosyltransferase H (857 aa).

6 helical membrane-spanning segments follow: residues 142–162, 196–216, 515–535, 572–592, 606–626, and 682–702; these read ILLALMIGQTIVAGWYMKGIL, ILILFGILFCWVSAGFWTALM, VFLTGVMSYLSAPLWFLFLVL, LFSTTIVLLFLPKLLSVILIW, TLSMLMEMLFSMLLAPVRMIF, and FLWWLAPIVGSLVLSIPVSVI.

This sequence belongs to the glycosyltransferase 2 family. OpgH subfamily.

Its subcellular location is the cell inner membrane. It functions in the pathway glycan metabolism; osmoregulated periplasmic glucan (OPG) biosynthesis. Functionally, involved in the biosynthesis of osmoregulated periplasmic glucans (OPGs). The polypeptide is Glucans biosynthesis glucosyltransferase H (Pseudomonas putida (strain ATCC 700007 / DSM 6899 / JCM 31910 / BCRC 17059 / LMG 24140 / F1)).